We begin with the raw amino-acid sequence, 174 residues long: Adenine phosphoribosyltransferase (174 aa).

It belongs to the purine/pyrimidine phosphoribosyltransferase family. As to quaternary structure, homodimer.

The protein localises to the cytoplasm. The enzyme catalyses AMP + diphosphate = 5-phospho-alpha-D-ribose 1-diphosphate + adenine. Its pathway is purine metabolism; AMP biosynthesis via salvage pathway; AMP from adenine: step 1/1. In terms of biological role, catalyzes a salvage reaction resulting in the formation of AMP, that is energically less costly than de novo synthesis. This chain is Adenine phosphoribosyltransferase, found in Agathobacter rectalis (strain ATCC 33656 / DSM 3377 / JCM 17463 / KCTC 5835 / VPI 0990) (Eubacterium rectale).